A 262-amino-acid chain; its full sequence is Integral membrane protein 2B (262 aa).

Over 1-49 (MVKVSFNSALAHKEAANKEEENSQVLILPPDAKEPEDVVVPAGHKRAWC) the chain is Cytoplasmic. Residues 50–70 (WCMCFGLAFMLAGVILGGAYL) form a helical; Signal-anchor for type II membrane protein membrane-spanning segment. The Lumenal segment spans residues 71–262 (YKYFAFQQGG…FAMETLICEQ (192 aa)). Residues 132–226 (FADSDPADIV…LCRGKETYKL (95 aa)) enclose the BRICHOS domain. Cystine bridges form between C159–C218 and C243–C260. N165 carries N-linked (GlcNAc...) asparagine glycosylation.

This sequence belongs to the ITM2 family. As to quaternary structure, homodimer; disulfide-linked. As to expression, expressed in areas of chondro-osteogenic transition and widely in the nervous system.

It is found in the golgi apparatus membrane. It localises to the cell membrane. The protein resides in the endosome membrane. Plays a role in the induction of neurite outgrowth. In Gallus gallus (Chicken), this protein is Integral membrane protein 2B (ITM2B).